The sequence spans 84 residues: Delta-thalatoxin-Cad1a (84 aa).

A signal peptide spans 1–19; sequence MAYLKIVLVALMLVLAVSA. A propeptide spanning residues 20-33 is cleaved from the precursor; it reads MRRPDQQDQDISVA. 3 disulfides stabilise this stretch: Cys38–Cys78, Cys40–Cys68, and Cys61–Cys79.

It belongs to the sea anemone sodium channel inhibitory toxin family. Type II subfamily.

The protein resides in the secreted. The protein localises to the nematocyst. Binds specifically to the voltage-gated sodium channel (Nav) and delays its inactivation. The chain is Delta-thalatoxin-Cad1a from Cryptodendrum adhaesivum (Adhesive sea anemone).